We begin with the raw amino-acid sequence, 282 residues long: Probable endonuclease 4 (282 aa).

Zn(2+) is bound by residues H69, H109, E145, D179, H182, H216, D229, H231, and E261.

Belongs to the AP endonuclease 2 family. Requires Zn(2+) as cofactor.

It carries out the reaction Endonucleolytic cleavage to 5'-phosphooligonucleotide end-products.. Endonuclease IV plays a role in DNA repair. It cleaves phosphodiester bonds at apurinic or apyrimidinic (AP) sites, generating a 3'-hydroxyl group and a 5'-terminal sugar phosphate. The protein is Probable endonuclease 4 of Edwardsiella ictaluri (strain 93-146).